The sequence spans 252 residues: Streptothricin hydrolase (252 aa).

The Nucleophile role is filled by C158. Residues 230-242 (AVGPAAAPGLPVS) show a composition bias toward low complexity. Positions 230-252 (AVGPAAAPGLPVSPAAPPPSPVR) are disordered. Over residues 243–252 (PAAPPPSPVR) the composition is skewed to pro residues.

Belongs to the isochorismatase family.

The enzyme catalyses streptothricin F + H2O = streptothricin F acid. In terms of biological role, catalyzes the hydrolysis of the amide bond of streptolidine lactam, thereby conferring streptothricin (ST) resistance. Can hydrolyze streptothricin-F and streptothricin-D. However, this strain is believed to be a ST nonproducer, which raises the possibility that its true role may not be its involvement in self-resistance to STs. May catalyze the hydrolysis of naturally occurring cyclic amide compounds that are structurally related to STs. The sequence is that of Streptothricin hydrolase (sttH) from Streptomyces noursei (Streptomyces albulus).